The sequence spans 241 residues: Uridylate kinase (241 aa).

An ATP-binding site is contributed by 12-15 (KISG). Residues 20-25 (GDKGNG) form an involved in allosteric activation by GTP region. G54 contacts UMP. ATP-binding residues include G55 and R59. UMP is bound by residues D74 and 135–142 (TGNPYFST). 3 residues coordinate ATP: N163, Y169, and D172.

This sequence belongs to the UMP kinase family. Homohexamer.

It localises to the cytoplasm. The enzyme catalyses UMP + ATP = UDP + ADP. It functions in the pathway pyrimidine metabolism; CTP biosynthesis via de novo pathway; UDP from UMP (UMPK route): step 1/1. With respect to regulation, allosterically activated by GTP. Inhibited by UTP. In terms of biological role, catalyzes the reversible phosphorylation of UMP to UDP. This is Uridylate kinase from Lactobacillus helveticus (strain DPC 4571).